A 204-amino-acid chain; its full sequence is Potassium-transporting ATPase KdpC subunit (204 aa).

The helical transmembrane segment at 21–41 (AALVIFVGLSLVTGVLYPVVV) threads the bilayer.

Belongs to the KdpC family. As to quaternary structure, the system is composed of three essential subunits: KdpA, KdpB and KdpC.

The protein localises to the cell inner membrane. In terms of biological role, part of the high-affinity ATP-driven potassium transport (or Kdp) system, which catalyzes the hydrolysis of ATP coupled with the electrogenic transport of potassium into the cytoplasm. This subunit acts as a catalytic chaperone that increases the ATP-binding affinity of the ATP-hydrolyzing subunit KdpB by the formation of a transient KdpB/KdpC/ATP ternary complex. The protein is Potassium-transporting ATPase KdpC subunit of Ralstonia nicotianae (strain ATCC BAA-1114 / GMI1000) (Ralstonia solanacearum).